The following is a 513-amino-acid chain: Maturase K (513 aa).

This sequence belongs to the intron maturase 2 family. MatK subfamily.

The protein localises to the plastid. Its subcellular location is the chloroplast. Functionally, usually encoded in the trnK tRNA gene intron. Probably assists in splicing its own and other chloroplast group II introns. This chain is Maturase K, found in Phaseolus vulgaris (Kidney bean).